The following is a 339-amino-acid chain: Phenylalanine--tRNA ligase alpha subunit (339 aa).

E254 is a binding site for Mg(2+).

It belongs to the class-II aminoacyl-tRNA synthetase family. Phe-tRNA synthetase alpha subunit type 1 subfamily. As to quaternary structure, tetramer of two alpha and two beta subunits. Mg(2+) is required as a cofactor.

The protein resides in the cytoplasm. It carries out the reaction tRNA(Phe) + L-phenylalanine + ATP = L-phenylalanyl-tRNA(Phe) + AMP + diphosphate + H(+). The polypeptide is Phenylalanine--tRNA ligase alpha subunit (Clostridium botulinum (strain ATCC 19397 / Type A)).